A 27-amino-acid chain; its full sequence is Antimicrobial peptide 1 (27 aa).

In terms of tissue distribution, expressed by the skin glands.

It localises to the secreted. Functionally, has very weak antimicrobial activity against Gram-positive bacterium S.aureus and Gram-negative bacterium E.coli and stronger activity against yeast C.albicans. Enhances the antibacterial activity of XT3. Has hemolytic activity against human red blood cells. This is Antimicrobial peptide 1 from Xenopus tropicalis (Western clawed frog).